The chain runs to 293 residues: Ribosomal RNA small subunit methyltransferase A (293 aa).

Residues N38, V40, G65, E86, D116, and N133 each contribute to the S-adenosyl-L-methionine site.

Belongs to the class I-like SAM-binding methyltransferase superfamily. rRNA adenine N(6)-methyltransferase family. RsmA subfamily.

The protein resides in the cytoplasm. It carries out the reaction adenosine(1518)/adenosine(1519) in 16S rRNA + 4 S-adenosyl-L-methionine = N(6)-dimethyladenosine(1518)/N(6)-dimethyladenosine(1519) in 16S rRNA + 4 S-adenosyl-L-homocysteine + 4 H(+). Its function is as follows. Specifically dimethylates two adjacent adenosines (A1518 and A1519) in the loop of a conserved hairpin near the 3'-end of 16S rRNA in the 30S particle. May play a critical role in biogenesis of 30S subunits. This Paenarthrobacter aurescens (strain TC1) protein is Ribosomal RNA small subunit methyltransferase A.